The following is a 274-amino-acid chain: MNKTAIALLALLASSASLAATPWQKITQPVPGSAQSIGSFSNGCIVGADTLPIQSEHYQVMRTDQRRYFGHPDLVMFIQRLSSQVSNLGMGTVLIGDMGMPAGGRFNGGHASHQTGLDVDIFLQLPKTRWTSAQLLRPQALDLVSRDGKHVVSTLWKPEIFSLIKLAAQDKDVTRIFVNPAIKQQLCFDAGTDRDWLRKVRPWFQHRAHMHVRLRCPADSLECEDQPLPPPGDGCGAELQSWFEPPKPGTTKPEKKTPPPLPPSCQALLDEHVI.

An N-terminal signal peptide occupies residues 1 to 19; it reads MNKTAIALLALLASSASLA. Intrachain disulfides connect Cys44–Cys265, Cys187–Cys235, and Cys216–Cys223. Residues His110, His113, Asp120, Asp147, His150, and His211 each coordinate Zn(2+). Residues 227-274 are disordered; the sequence is PLPPPGDGCGAELQSWFEPPKPGTTKPEKKTPPPLPPSCQALLDEHVI.

This sequence belongs to the peptidase M74 family. As to quaternary structure, dimer. The cofactor is Zn(2+).

It is found in the periplasm. In terms of biological role, murein endopeptidase that cleaves the D-alanyl-meso-2,6-diamino-pimelyl amide bond that connects peptidoglycan strands. Likely plays a role in the removal of murein from the sacculus. The polypeptide is Penicillin-insensitive murein endopeptidase (Escherichia coli O9:H4 (strain HS)).